We begin with the raw amino-acid sequence, 303 residues long: MAGREDGAAAGAMEEGQDSKEVKCESSEDGSSSSSSSRCHGNDVISVQFMQKVHPWCMCMNKNLLILAEILGTYFMIFAGCGAVVVNQSTGGAVTFPGICAVWGLVVMVLVYTVSHISGAHFNPAVTVAFATCGRFRWKQVPSYVVAQVLGSTMASLTLRVVFGGGGGGARGEHLFFGTTPAGSMAQAAALEFVISFFLMFVVSGVATDNRAIGELAGLAVGATVAVNVLFAGPVTGASMNPARSLGPAMVAGRYGGVWVYVAAPVSGTVCGAWAYNLLRFTDKPLRDIANTASFLRRSSRRS.

The segment at Met-1–Cys-39 is disordered. Residues Gln-17–Ser-26 show a composition bias toward basic and acidic residues. A run of 2 helical transmembrane segments spans residues Ile-66–Val-86 and Gly-91–Val-111. Residues Asn-123 to Ala-125 carry the NPA 1 motif. The next 3 membrane-spanning stretches (helical) occupy residues Val-145–Gly-165, Ala-188–Thr-208, and Ala-212–Ala-232. The NPA 2 motif lies at Asn-241–Ala-243. Residues Tyr-255 to Ala-275 traverse the membrane as a helical segment.

It belongs to the MIP/aquaporin (TC 1.A.8) family. NIP (TC 1.A.8.12) subfamily. In terms of tissue distribution, expressed in roots and leaves, and at lower levels in anthers.

Its subcellular location is the membrane. Aquaporins facilitate the transport of water and small neutral solutes across cell membranes. This Oryza sativa subsp. japonica (Rice) protein is Aquaporin NIP1-2 (NIP1-2).